The primary structure comprises 85 residues: Small ribosomal subunit protein uS17 (85 aa).

The protein belongs to the universal ribosomal protein uS17 family. As to quaternary structure, part of the 30S ribosomal subunit.

One of the primary rRNA binding proteins, it binds specifically to the 5'-end of 16S ribosomal RNA. The protein is Small ribosomal subunit protein uS17 of Anaeromyxobacter dehalogenans (strain 2CP-1 / ATCC BAA-258).